Here is a 1333-residue protein sequence, read N- to C-terminus: DNA-directed RNA polymerase subunit beta' (1333 aa).

Residues Cys60, Cys62, Cys75, and Cys78 each contribute to the Zn(2+) site. Mg(2+) contacts are provided by Asp535, Asp537, and Asp539. Zn(2+) is bound by residues Cys901, Cys983, Cys990, and Cys993.

This sequence belongs to the RNA polymerase beta' chain family. The RNAP catalytic core consists of 2 alpha, 1 beta, 1 beta' and 1 omega subunit. When a sigma factor is associated with the core the holoenzyme is formed, which can initiate transcription. Requires Mg(2+) as cofactor. Zn(2+) serves as cofactor.

It catalyses the reaction RNA(n) + a ribonucleoside 5'-triphosphate = RNA(n+1) + diphosphate. DNA-dependent RNA polymerase catalyzes the transcription of DNA into RNA using the four ribonucleoside triphosphates as substrates. This chain is DNA-directed RNA polymerase subunit beta', found in Corynebacterium efficiens (strain DSM 44549 / YS-314 / AJ 12310 / JCM 11189 / NBRC 100395).